Reading from the N-terminus, the 304-residue chain is HTH-type transcriptional regulator BenM (304 aa).

In terms of domain architecture, HTH lysR-type spans 1–58; sequence MELRHLRYFVAVVEEQSFTKAADKLCIAQPPLSRQIQNLEEELGIQLLERGSRPVKTT. Residues 18 to 37 constitute a DNA-binding region (H-T-H motif); it reads FTKAADKLCIAQPPLSRQIQ. Benzoate-binding residues include S99 and L104. Position 99 (S99) interacts with cis,cis-muconate. Residue T128 coordinates cis,cis-muconate. Residues F144, R160, and N202 each coordinate benzoate. F203 contributes to the cis,cis-muconate binding site. Y293 is a binding site for benzoate.

Belongs to the LysR transcriptional regulatory family. As to quaternary structure, homotetramer; dimer of dimers. The dimers can also associate to form linear, higher oligomers (in vitro).

In terms of biological role, positive regulator of the ben and cat genes for benzoate degradation. BenM is necessary for ben gene expression but not for expression of the cat genes, which can be regulated by CatM. Binds to the inducers cis,cis-muconate and benzoate. This is HTH-type transcriptional regulator BenM (benM) from Acinetobacter baylyi (strain ATCC 33305 / BD413 / ADP1).